Consider the following 186-residue polypeptide: ATP synthase subunit delta (186 aa).

The protein belongs to the ATPase delta chain family. As to quaternary structure, F-type ATPases have 2 components, F(1) - the catalytic core - and F(0) - the membrane proton channel. F(1) has five subunits: alpha(3), beta(3), gamma(1), delta(1), epsilon(1). CF(0) has four main subunits: a(1), b(1), b'(1) and c(10-14). The alpha and beta chains form an alternating ring which encloses part of the gamma chain. F(1) is attached to F(0) by a central stalk formed by the gamma and epsilon chains, while a peripheral stalk is formed by the delta, b and b' chains.

The protein localises to the cell inner membrane. Its function is as follows. F(1)F(0) ATP synthase produces ATP from ADP in the presence of a proton or sodium gradient. F-type ATPases consist of two structural domains, F(1) containing the extramembraneous catalytic core and F(0) containing the membrane proton channel, linked together by a central stalk and a peripheral stalk. During catalysis, ATP synthesis in the catalytic domain of F(1) is coupled via a rotary mechanism of the central stalk subunits to proton translocation. This protein is part of the stalk that links CF(0) to CF(1). It either transmits conformational changes from CF(0) to CF(1) or is implicated in proton conduction. The protein is ATP synthase subunit delta of Bradyrhizobium sp. (strain ORS 278).